The chain runs to 169 residues: Ribosome maturation factor RimP (169 aa).

It belongs to the RimP family.

It is found in the cytoplasm. Functionally, required for maturation of 30S ribosomal subunits. The sequence is that of Ribosome maturation factor RimP from Koribacter versatilis (strain Ellin345).